A 75-amino-acid polypeptide reads, in one-letter code: Pi-hexatoxin-Hi1a (75 aa).

Intrachain disulfides connect C3–C18, C10–C23, C17–C33, C40–C55, C47–C60, and C54–C71. Domain repeat units lie at residues 3–33 and 40–71; these read CIRK…FEVC and CLVK…SSVC. The 2 X approximate repeats with cysteine pattern C-C-CC-C-C stretch occupies residues 3 to 71; the sequence is CIRKWLSCVD…KRSGNKSSVC (69 aa).

The protein belongs to the psalmotoxin-1 family. Double-knot toxin subfamily. As to expression, expressed by the venom gland.

The protein localises to the secreted. Its function is as follows. This toxin potently and selectively inhibits ASIC1a (IC(50)=0.4 nM on rASIC1a and IC(50)=0.52 nM on hASIC1a), an isoform of the gene ASIC1. It incompletely inhibits ASIC1a activation in a pH-independent and slowly reversible manner (Tau(off)=14.2 minutes for rASIC1a and 31.8 minutes for hASIC1a). This toxin acts by binding to and stabilizing the closed state of the channel, thereby impeding the transition into a conducting state. This toxin may bind to the acidic pocket of ASIC1a, since mutation of a key residue of this pocket (Arg-350) abolishes the ability of the toxin to inhibit ASIC1a. In addition, it shows antiparasitic activities, since it moderately inhibits the larval development of the major pathogenic nematode of ruminants (H.contortus, IC(50)=22.9 uM). In vivo, this toxin protects the brain from neuronal injury when administered up to 8 hours after stroke onset. This chain is Pi-hexatoxin-Hi1a, found in Hadronyche infensa (Fraser island funnel-web spider).